Reading from the N-terminus, the 519-residue chain is F-box only protein 31-A (519 aa).

The disordered stretch occupies residues 11–37 (GQSGGCRRRQQRKGAGNDPELEDEEEE). The 47-residue stretch at 54-100 (PHSLLLLPPEILVEIFSLLPGTELGGLAQVCSKFRQILTTDTIWKRR) folds into the F-box domain. Zn(2+) is bound by residues cysteine 196, histidine 204, cysteine 220, and histidine 226. Basic and acidic residues predominate over residues 369–390 (REQRQTDNEEDDGRGAGPDKAE). The interval 369–424 (REQRQTDNEEDDGRGAGPDKAEPAQQPAPLLRPPNEDANGADDDGDGGEQKPPNVQ) is disordered.

This sequence belongs to the FBXO31 family. Part of a SCF (SKP1-cullin-F-box) protein ligase complex SCF(FBXO31).

Its subcellular location is the cytoplasm. It functions in the pathway protein modification; protein ubiquitination. Functionally, substrate-recognition component of the SCF(FBXO31) protein ligase complex, which specifically mediates the ubiquitination of proteins amidated at their C-terminus in response to oxidative stress, leading to their degradation by the proteasome. Fbxo31 specifically recognizes and binds C-terminal peptides bearing an amide: C-terminal amidation in response to oxidative stress takes place following protein fragmentation. The SCF(FBXO31) also plays a role in G1 arrest following DNA damage by mediating ubiquitination of phosphorylated cyclin-D1 (ccnd1), promoting its degradation by the proteasome, resulting in G1 arrest. The SCF(FBXO31) complex is however not a major regulator of ccnd1 stability during the G1/S transition. The chain is F-box only protein 31-A (fbxo31-a) from Xenopus laevis (African clawed frog).